A 155-amino-acid chain; its full sequence is 6,7-dimethyl-8-ribityllumazine synthase (155 aa).

Residues F24, A58–E60, and A82–I84 each bind 5-amino-6-(D-ribitylamino)uracil. S87 to T88 serves as a coordination point for (2S)-2-hydroxy-3-oxobutyl phosphate. The Proton donor role is filled by H90. F115 serves as a coordination point for 5-amino-6-(D-ribitylamino)uracil. R129 serves as a coordination point for (2S)-2-hydroxy-3-oxobutyl phosphate.

Belongs to the DMRL synthase family.

It carries out the reaction (2S)-2-hydroxy-3-oxobutyl phosphate + 5-amino-6-(D-ribitylamino)uracil = 6,7-dimethyl-8-(1-D-ribityl)lumazine + phosphate + 2 H2O + H(+). It functions in the pathway cofactor biosynthesis; riboflavin biosynthesis; riboflavin from 2-hydroxy-3-oxobutyl phosphate and 5-amino-6-(D-ribitylamino)uracil: step 1/2. Catalyzes the formation of 6,7-dimethyl-8-ribityllumazine by condensation of 5-amino-6-(D-ribitylamino)uracil with 3,4-dihydroxy-2-butanone 4-phosphate. This is the penultimate step in the biosynthesis of riboflavin. This Chlorobium luteolum (strain DSM 273 / BCRC 81028 / 2530) (Pelodictyon luteolum) protein is 6,7-dimethyl-8-ribityllumazine synthase.